A 296-amino-acid polypeptide reads, in one-letter code: Small ribosomal subunit protein uS2 (296 aa).

The interval 245–296 (WEAPAAGFAGATGTGWDGAAGDEWGAAPATTEWAASAAPAAASGEAAKETTW) is disordered. The segment covering 263 to 289 (AAGDEWGAAPATTEWAASAAPAAASGE) has biased composition (low complexity).

It belongs to the universal ribosomal protein uS2 family. Component of the small ribosomal subunit. Mature ribosomes consist of a small (40S) and a large (60S) subunit. The 40S subunit contains about 33 different proteins and 1 molecule of RNA (18S). The 60S subunit contains about 49 different proteins and 3 molecules of RNA (25S, 5.8S and 5S). Interacts with RPS21.

The protein resides in the cytoplasm. In terms of biological role, required for the assembly and/or stability of the 40S ribosomal subunit. Required for the processing of the 20S rRNA-precursor to mature 18S rRNA in a late step of the maturation of 40S ribosomal subunits. The polypeptide is Small ribosomal subunit protein uS2 (Fusarium vanettenii (strain ATCC MYA-4622 / CBS 123669 / FGSC 9596 / NRRL 45880 / 77-13-4) (Fusarium solani subsp. pisi)).